Consider the following 245-residue polypeptide: rRNA adenine N-6-methyltransferase (245 aa).

S-adenosyl-L-methionine contacts are provided by Asn10, Leu12, Gly37, Glu58, Asp83, and Asn100.

Belongs to the class I-like SAM-binding methyltransferase superfamily. rRNA adenine N(6)-methyltransferase family.

The catalysed reaction is adenosine(2085) in 23S rRNA + 2 S-adenosyl-L-methionine = N(6)-dimethyladenosine(2085) in 23S rRNA + 2 S-adenosyl-L-homocysteine + 2 H(+). Its function is as follows. This protein produces a dimethylation of the adenine residue at position 2085 in 23S rRNA, resulting in reduced affinity between ribosomes and macrolide-lincosamide-streptogramin B antibiotics. This Escherichia coli protein is rRNA adenine N-6-methyltransferase (ermBC).